Consider the following 414-residue polypeptide: Serine/threonine transporter SstT (414 aa).

Residues 2 to 15 (TTQHSPGLFRRLAH) lie on the Cytoplasmic side of the membrane. Residues 16–36 (GSLVKQILAGLILGILLAWIS) form a helical membrane-spanning segment. Topologically, residues 37–45 (KPAAEAVGL) are periplasmic. A helical membrane pass occupies residues 46–66 (LGTLFVGALKAVAPILVLMLV). At 67 to 83 (MASIANHQHGQKTNIRP) the chain is on the cytoplasmic side. A helical transmembrane segment spans residues 84-104 (ILFLYLLGTFSAALAAVIFSF). The Periplasmic portion of the chain corresponds to 105-142 (AFPSTLHLSSSAGDISPPSGIVEVMRGLVMSMVSNPID). Residues 143 to 163 (ALLKGNYIGILVWAIGLGFAL) traverse the membrane as a helical segment. At 164 to 179 (RHGNETTKNLVNDMSN) the chain is on the cytoplasmic side. A helical transmembrane segment spans residues 180-200 (AVTFMVKLVIHFAPIGIFGLV). The Periplasmic portion of the chain corresponds to 201 to 217 (SSTLATTGFSTLWGYAQ). Residues 218-238 (LLVVLVGCMLLVALVVNPLLV) traverse the membrane as a helical segment. Residues 239–299 (WWKIRRNPFP…VSIPLGATIN (61 aa)) lie on the Cytoplasmic side of the membrane. The chain crosses the membrane as a helical span at residues 300–320 (MAGAAITITVLTLAAVNTLGI). The Periplasmic portion of the chain corresponds to 321–331 (PVDLPTALLLS). Residues 332 to 352 (VVASLCACGASGVAGGSLLLI) traverse the membrane as a helical segment. Residues 353–414 (PLACNMFGIS…DRLANSALRN (62 aa)) are Cytoplasmic-facing.

It belongs to the dicarboxylate/amino acid:cation symporter (DAACS) (TC 2.A.23) family.

It is found in the cell inner membrane. It carries out the reaction L-serine(in) + Na(+)(in) = L-serine(out) + Na(+)(out). The catalysed reaction is L-threonine(in) + Na(+)(in) = L-threonine(out) + Na(+)(out). Involved in the import of serine and threonine into the cell, with the concomitant import of sodium (symport system). This Escherichia coli (strain UTI89 / UPEC) protein is Serine/threonine transporter SstT.